Here is a 544-residue protein sequence, read N- to C-terminus: MESQRNILLIGLLFVSFLLWQQWQADQAPQPVAAAQTQSSIPASTVADSHSSDVPDADSAVPEAITASKELITVFTDQLEIKIDPVGGDIVYSALLSHKLEENGDDPFVLLEQTNDIYYIAQSGLIGRDGIDSSVKGRAHFDSASREYKLADGQDTLSVPLTYVSDKGVTYTKSFVFTRGKYNIAVDYKINNTSDASLQVQMYGQIKHSIKKSESSMMMPTYLGGAFSTDDIRYEKYSFDDMADKNLDDSTLGGWVAMLQHYFVSAWVPPATEKNIIFSSMKNGLANIGFRGELHDIAPGSEQVIKSEFYVGPKDQKALSVLSPSLNLVVDYGFLWWLAVPIYKLLMFFHSIVGNWGFAIILITLTVRGLLYPLTKAQYTSMAKMRNLQPKLAELKERFGDDRQKMGQAMMELYKKEKVNPMGGCLPILLQMPIFIALYWVLLESVELRHAPFMLWITDLSVQDPYYVLPILMGISMFVMQKMQPMAPTMDPMQVKMMQWMPVIFTVFFLWFPAGLVLYWLVGNLVAITQQKIIYAGLEKKGLK.

The chain crosses the membrane as a helical span at residues 6-26 (NILLIGLLFVSFLLWQQWQAD). Positions 34 to 58 (AAQTQSSIPASTVADSHSSDVPDAD) are disordered. A compositionally biased stretch (polar residues) spans 39-49 (SSIPASTVADS). 4 consecutive transmembrane segments (helical) span residues 345-365 (LLMF…LITL), 423-443 (GGCL…WVLL), 460-480 (LSVQ…MFVM), and 503-523 (VIFT…WLVG).

It belongs to the OXA1/ALB3/YidC family. Type 1 subfamily. In terms of assembly, interacts with the Sec translocase complex via SecD. Specifically interacts with transmembrane segments of nascent integral membrane proteins during membrane integration.

Its subcellular location is the cell inner membrane. Functionally, required for the insertion and/or proper folding and/or complex formation of integral membrane proteins into the membrane. Involved in integration of membrane proteins that insert both dependently and independently of the Sec translocase complex, as well as at least some lipoproteins. Aids folding of multispanning membrane proteins. This Shewanella halifaxensis (strain HAW-EB4) protein is Membrane protein insertase YidC.